Reading from the N-terminus, the 840-residue chain is MRSVITTLTLVASVGLAVAENGFDGWLRYAPVSCHGACQKSLPSHIVTLDPTESSPISVAGQEIQDGLQRMFKMHATVEPKGCSTRSSVIIGTLDAYNHACKDADPVPELEEDGFWLNTKDGKVQIIGQSERGALYGAYEYLSMLSQGNFAPVSYTTSPHAPIRWVNQWDNMDGSMEHGYGGLSIFFKDGVIPQDLSRVKQYARLLASIRINGIIVNNVNANASLLKPENMDGLARIADIFRPYGVKVGISLNFASPSTLGGLNTYDPLDESVISWWGGITDELYKRVPDMAGYLVKANSEGQPGPTTYNRTLAEGANLFARALKPHGGIVMFRAFVYDHHISEENWYNDRANAAVDFFKPLDGKFEENVVVQIKYGPIDFQVREPVSPLFANLYKTNTAIELQVTQEYLGQQSHLVYLPPLWQTILGFDLRVDGKPSPTRDIISGQRFNRPLGGWAAVVNVGTNTTWLGSHLALSNLYAYGRLAWEPTLDSQDILQDWIRMTFGLDRRVLDTITKMSMESWPAYENYSGNLGIQTLTDILYTHYGPNPASQDGNGWGQWTRADHEAIGMDRTIKNGTKFTGQYPAEVAQVYENIETTPDDLLLWFHHVPYTQRLQSGKTVIQHFYDAHYAGADTAQTFVSQWESLRGKIDPERYEHVLTRLIYQAGHSIVWRDAINEFYHNLSGIADEKQRVGHHPWRIEAEDMKLDGYVPYDVNPFETASNTKAIVTATNSTTGTASTQLDFKTGKYDLGINYYDFYGGKSQWTAYLNDRLVGQWQGNNEDVLSHELSVYLDGHSATRITFRDVKIHKGDRLKIVGKPDGMEPAPLDYVVLLPQGIVD.

The N-terminal stretch at 1–19 (MRSVITTLTLVASVGLAVA) is a signal peptide. Residues asparagine 222, asparagine 310, asparagine 465, asparagine 527, asparagine 576, asparagine 682, and asparagine 732 are each glycosylated (N-linked (GlcNAc...) asparagine).

It belongs to the glycosyl hydrolase 67 family.

The protein localises to the secreted. It carries out the reaction an alpha-D-glucuronoside + H2O = D-glucuronate + an alcohol. Alpha-glucuronidase involved in the hydrolysis of xylan, a major structural heterogeneous polysaccharide found in plant biomass representing the second most abundant polysaccharide in the biosphere, after cellulose. Releases 4-O-methylglucuronic acid from xylan. The protein is Probable alpha-glucuronidase A (aguA) of Aspergillus clavatus (strain ATCC 1007 / CBS 513.65 / DSM 816 / NCTC 3887 / NRRL 1 / QM 1276 / 107).